A 705-amino-acid chain; its full sequence is uncharacterized protein (705 aa).

Catalysis depends on charge relay system residues serine 554 and histidine 676.

Belongs to the peptidase S9A family.

This is an uncharacterized protein from Sinorhizobium fredii (strain NBRC 101917 / NGR234).